The chain runs to 337 residues: 2-oxoglutarate-dependent dioxygenase 19 (337 aa).

The segment at 1 to 25 is disordered; that stretch reads MVAPSRLPSHEEQSAAAAADGSATP. One can recognise a Fe2OG dioxygenase domain in the interval 179–283; the sequence is NLESCFQILV…RMSFVSLIGP (105 aa). 3 residues coordinate Fe cation: histidine 208, aspartate 210, and histidine 264. Arginine 274 serves as a coordination point for 2-oxoglutarate.

Belongs to the iron/ascorbate-dependent oxidoreductase family. Requires Fe(2+) as cofactor. The cofactor is L-ascorbate. As to expression, expressed in shoots.

It localises to the cytoplasm. It carries out the reaction melatonin + 2-oxoglutarate + O2 = 2-hydroxymelatonin + succinate + CO2. In terms of biological role, involved in melatonin degradation. Catalyzes the hydroxylation of melatonin to produce 2-hydroxymelatonin. In Oryza sativa subsp. japonica (Rice), this protein is 2-oxoglutarate-dependent dioxygenase 19.